The sequence spans 125 residues: Probable endoribonuclease HigB1 (125 aa).

It belongs to the mycobacterial HigB family.

Toxic component of an atypical, type II toxin-antitoxin chaperone (TAC) system. Probably an endoribonuclease, neutralized by its cognate antitoxin HigA which also requires SecB-like chaperone MT2006 (AC Q7D7P7). This Mycobacterium tuberculosis (strain CDC 1551 / Oshkosh) protein is Probable endoribonuclease HigB1.